We begin with the raw amino-acid sequence, 131 residues long: Small ribosomal subunit protein uS9 (131 aa).

Belongs to the universal ribosomal protein uS9 family.

The polypeptide is Small ribosomal subunit protein uS9 (Mannheimia succiniciproducens (strain KCTC 0769BP / MBEL55E)).